Reading from the N-terminus, the 215-residue chain is Octanoyltransferase (215 aa).

The BPL/LPL catalytic domain occupies 31-206; sequence TTAPDEIWLV…QLVKHLDYAE (176 aa). Substrate-binding positions include 70 to 77, 137 to 139, and 150 to 152; these read RGGQVTYH, SLG, and GLA. The active-site Acyl-thioester intermediate is the cysteine 168.

The protein belongs to the LipB family.

Its subcellular location is the cytoplasm. The catalysed reaction is octanoyl-[ACP] + L-lysyl-[protein] = N(6)-octanoyl-L-lysyl-[protein] + holo-[ACP] + H(+). It participates in protein modification; protein lipoylation via endogenous pathway; protein N(6)-(lipoyl)lysine from octanoyl-[acyl-carrier-protein]: step 1/2. Its function is as follows. Catalyzes the transfer of endogenously produced octanoic acid from octanoyl-acyl-carrier-protein onto the lipoyl domains of lipoate-dependent enzymes. Lipoyl-ACP can also act as a substrate although octanoyl-ACP is likely to be the physiological substrate. The polypeptide is Octanoyltransferase (Pseudomonas fluorescens (strain Pf0-1)).